The following is a 466-amino-acid chain: Ribulose bisphosphate carboxylase large chain (466 aa).

N6,N6,N6-trimethyllysine is present on Lys-5. Positions 114 and 164 each coordinate substrate. Lys-166 serves as the catalytic Proton acceptor. Substrate is bound at residue Lys-168. Positions 192, 194, and 195 each coordinate Mg(2+). N6-carboxylysine is present on Lys-192. Residue His-285 is the Proton acceptor of the active site. Substrate contacts are provided by Arg-286, His-318, and Ser-370.

Belongs to the RuBisCO large chain family. Type I subfamily. In terms of assembly, heterohexadecamer of 8 large chains and 8 small chains; disulfide-linked. The disulfide link is formed within the large subunit homodimers. Requires Mg(2+) as cofactor. Post-translationally, the disulfide bond which can form in the large chain dimeric partners within the hexadecamer appears to be associated with oxidative stress and protein turnover.

It is found in the plastid. Its subcellular location is the chloroplast. It catalyses the reaction 2 (2R)-3-phosphoglycerate + 2 H(+) = D-ribulose 1,5-bisphosphate + CO2 + H2O. The enzyme catalyses D-ribulose 1,5-bisphosphate + O2 = 2-phosphoglycolate + (2R)-3-phosphoglycerate + 2 H(+). Its function is as follows. RuBisCO catalyzes two reactions: the carboxylation of D-ribulose 1,5-bisphosphate, the primary event in carbon dioxide fixation, as well as the oxidative fragmentation of the pentose substrate in the photorespiration process. Both reactions occur simultaneously and in competition at the same active site. The chain is Ribulose bisphosphate carboxylase large chain from Hedera helix (English ivy).